The primary structure comprises 392 residues: 2-oxoisovalerate dehydrogenase subunit beta, mitochondrial (392 aa).

The transit peptide at 1–50 directs the protein to the mitochondrion; sequence MAVVAAAAGWLLRLRAAGAEGHWRRLPGAGLARGFLHPAATVEDAAQRRQ. Thiamine diphosphate is bound at residue Y152. K(+) contacts are provided by G178, L180, T181, C228, and D231. Residue K232 is modified to N6-acetyllysine. Position 233 (N233) interacts with K(+). K241 carries the N6-acetyllysine modification.

Heterotetramer of 2 alpha/BCKDHA and 2 beta chains/BCKDHB that forms the branched-chain alpha-keto acid decarboxylase (E1) component of the BCKD complex. The branched-chain alpha-ketoacid dehydrogenase is a large complex composed of three major building blocks E1, E2 and E3. It is organized around E2, a 24-meric cubic core composed of DBT, to which are associated 6 to 12 copies of E1, and approximately 6 copies of the dehydrogenase E3, a DLD dimer. Thiamine diphosphate is required as a cofactor.

Its subcellular location is the mitochondrion matrix. It carries out the reaction N(6)-[(R)-lipoyl]-L-lysyl-[protein] + 3-methyl-2-oxobutanoate + H(+) = N(6)-[(R)-S(8)-2-methylpropanoyldihydrolipoyl]-L-lysyl-[protein] + CO2. In terms of biological role, together with BCKDHA forms the heterotetrameric E1 subunit of the mitochondrial branched-chain alpha-ketoacid dehydrogenase (BCKD) complex. The BCKD complex catalyzes the multi-step oxidative decarboxylation of alpha-ketoacids derived from the branched-chain amino-acids valine, leucine and isoleucine producing CO2 and acyl-CoA which is subsequently utilized to produce energy. The E1 subunit catalyzes the first step with the decarboxylation of the alpha-ketoacid forming an enzyme-product intermediate. A reductive acylation mediated by the lipoylamide cofactor of E2 extracts the acyl group from the E1 active site for the next step of the reaction. This Homo sapiens (Human) protein is 2-oxoisovalerate dehydrogenase subunit beta, mitochondrial.